The sequence spans 908 residues: Translation initiation factor IF-2 (908 aa).

Disordered stretches follow at residues 123–154 and 212–278; these read EEPPILQPELPTEEKEELEVIESPQAPQEELK and KKEP…VSEK. One can recognise a tr-type G domain in the interval 407–577; that stretch reads ERAPIVTIMG…LFEAELLELK (171 aa). The interval 416–423 is G1; sequence GHVDHGKT. A GTP-binding site is contributed by 416–423; it reads GHVDHGKT. The tract at residues 441-445 is G2; sequence GITQH. Residues 463 to 466 are G3; the sequence is DTPG. GTP is bound by residues 463–467 and 517–520; these read DTPGH and NKMD. The interval 517–520 is G4; that stretch reads NKMD. Residues 553-555 are G5; sequence SAI.

The protein belongs to the TRAFAC class translation factor GTPase superfamily. Classic translation factor GTPase family. IF-2 subfamily.

The protein localises to the cytoplasm. One of the essential components for the initiation of protein synthesis. Protects formylmethionyl-tRNA from spontaneous hydrolysis and promotes its binding to the 30S ribosomal subunits. Also involved in the hydrolysis of GTP during the formation of the 70S ribosomal complex. This chain is Translation initiation factor IF-2, found in Amoebophilus asiaticus (strain 5a2).